The following is a 170-amino-acid chain: MAVKIKLARFGKIRNPQYRISVADARNRRDGRAIEVIGRYHPKEDPSIIEIDSERAQYWLGVGAQPTEPVLQLLKITGDWQKFKGLPGAEGTLKHKEPKPSKLDLFNAALAEAEGGPSTEATTPKKKKAPAKKDEQPTEKAAEPAAEKAAEPAAEAPAEAAAESEAPAAE.

A disordered region spans residues Ala-109–Glu-170. Residues Ala-131–Ala-150 show a composition bias toward basic and acidic residues. A compositionally biased stretch (low complexity) spans Glu-151 to Glu-170.

The protein belongs to the bacterial ribosomal protein bS16 family.

This Mycolicibacterium gilvum (strain PYR-GCK) (Mycobacterium gilvum (strain PYR-GCK)) protein is Small ribosomal subunit protein bS16.